The chain runs to 234 residues: Uridylate kinase (234 aa).

Residue 9-12 coordinates ATP; it reads KLSG. Gly-51 contacts UMP. ATP contacts are provided by Gly-52 and Arg-56. Residues Asp-71 and 132-139 contribute to the UMP site; that span reads CGNPFFTT. ATP-binding residues include Thr-159, Tyr-165, and Asp-168.

Belongs to the UMP kinase family. As to quaternary structure, homohexamer.

Its subcellular location is the cytoplasm. It carries out the reaction UMP + ATP = UDP + ADP. It participates in pyrimidine metabolism; CTP biosynthesis via de novo pathway; UDP from UMP (UMPK route): step 1/1. Its activity is regulated as follows. Inhibited by UTP. In terms of biological role, catalyzes the reversible phosphorylation of UMP to UDP. This Prochlorococcus marinus (strain AS9601) protein is Uridylate kinase.